Here is a 131-residue protein sequence, read N- to C-terminus: Chromatin accessibility complex protein 1 (131 aa).

An N-acetylalanine modification is found at alanine 2. A coiled-coil region spans residues 100 to 124; it reads ASKYLKMLKEEKREEDEENDNDNES. N6-acetyllysine is present on lysine 102. The segment at 109–131 is disordered; that stretch reads EEKREEDEENDNDNESDHDEADS. Acidic residues predominate over residues 112-131; sequence REEDEENDNDNESDHDEADS. Serine 124 is modified (phosphoserine).

Heterodimer with POLE3; binds to DNA. Component of the CHRAC ISWI chromatin remodeling complex at least composed of SMARCA5/SNF2H, BAZ1A/ACF1, CHRAC1 and POLE3; the complex preferentially binds DNA through the CHRAC1-POLE3 heterodimer and possesses ATP-dependent nucleosome-remodeling activity. Within the complex, the heterodimer with POLE3 interacts with SMARCA5/SNF2H; the interaction is direct and enhances nucleosome sliding activity by the SMARCA5/SNF2H and BAZ1A/ACF1 interaction. Within the complex, the heterodimer with POLE3 interacts with BAZ1A/ACF1; the interactions are direct. In terms of tissue distribution, expressed in heart, brain, placenta, lung, liver, skeletal muscle, kidney and pancreas.

It localises to the nucleus. Functionally, forms a complex with DNA polymerase epsilon subunit POLE3 and binds naked DNA, which is then incorporated into chromatin, aided by the nucleosome remodeling activity of ISWI/SNF2H and ACF1. Does not enhance nucleosome sliding activity of the ACF-5 ISWI chromatin remodeling complex. This is Chromatin accessibility complex protein 1 (CHRAC1) from Homo sapiens (Human).